A 249-amino-acid polypeptide reads, in one-letter code: Adenylate kinase (249 aa).

Position 43 to 48 (43 to 48 (GAGKGT)) interacts with ATP. Positions 63 to 92 (ATGDMLRAQVAAKTALGVEAKKIMDQGGLV) are NMP. AMP contacts are provided by residues Thr-64, Arg-69, 90–92 (GLV), 119–122 (GFPR), and Gln-126. Residues 160–197 (GRLVHPASGRSYHKLFNPPKKDMTDDVTGEPLVQRSDD) form an LID region. Residues Arg-161 and 170–171 (SY) each bind ATP. Residues 177–197 (PPKKDMTDDVTGEPLVQRSDD) form a disordered region. Positions 194 and 205 each coordinate AMP. Position 233 (Gln-233) interacts with ATP.

The protein belongs to the adenylate kinase family. AK2 subfamily. As to quaternary structure, monomer.

The protein resides in the cytoplasm. Its subcellular location is the cytosol. It is found in the mitochondrion intermembrane space. It carries out the reaction AMP + ATP = 2 ADP. Functionally, catalyzes the reversible transfer of the terminal phosphate group between ATP and AMP. Plays an important role in cellular energy homeostasis and in adenine nucleotide metabolism. Adenylate kinase activity is critical for regulation of the phosphate utilization and the AMP de novo biosynthesis pathways. The polypeptide is Adenylate kinase (Candida albicans (strain SC5314 / ATCC MYA-2876) (Yeast)).